Here is a 768-residue protein sequence, read N- to C-terminus: Probable beta-glucosidase M (768 aa).

The first 19 residues, 1–19, serve as a signal peptide directing secretion; that stretch reads MHAIAGLTGLLAGVSLSYA. Residues asparagine 25, asparagine 72, and asparagine 259 are each glycosylated (N-linked (GlcNAc...) asparagine). Aspartate 287 is a catalytic residue. N-linked (GlcNAc...) asparagine glycosylation is found at asparagine 315, asparagine 322, asparagine 394, asparagine 434, asparagine 472, asparagine 543, and asparagine 651.

Belongs to the glycosyl hydrolase 3 family.

Its subcellular location is the secreted. The enzyme catalyses Hydrolysis of terminal, non-reducing beta-D-glucosyl residues with release of beta-D-glucose.. The protein operates within glycan metabolism; cellulose degradation. Functionally, beta-glucosidases are one of a number of cellulolytic enzymes involved in the degradation of cellulosic biomass. Catalyzes the last step releasing glucose from the inhibitory cellobiose. This Aspergillus oryzae (strain ATCC 42149 / RIB 40) (Yellow koji mold) protein is Probable beta-glucosidase M (bglM).